We begin with the raw amino-acid sequence, 247 residues long: Cell division protein ZapD (247 aa).

It belongs to the ZapD family. In terms of assembly, interacts with FtsZ.

It localises to the cytoplasm. In terms of biological role, cell division factor that enhances FtsZ-ring assembly. Directly interacts with FtsZ and promotes bundling of FtsZ protofilaments, with a reduction in FtsZ GTPase activity. This chain is Cell division protein ZapD, found in Escherichia coli O7:K1 (strain IAI39 / ExPEC).